The sequence spans 155 residues: uncharacterized protein (155 aa).

2 disordered regions span residues 24 to 63 and 80 to 155; these read RVGY…VVLK and KAAK…DENE. A Phosphoserine modification is found at serine 50. Lysine 108 bears the N6-acetyllysine mark. Residues 128 to 147 show a composition bias toward polar residues; sequence KQSSVRKNSQKQIKNSSLLS. A phosphoserine mark is found at serine 130, serine 147, and serine 150.

This is an uncharacterized protein from Mus musculus (Mouse).